Consider the following 129-residue polypeptide: Procyclic form-specific polypeptide A-beta (129 aa).

A signal peptide spans 1–27 (MAPRSLYLLAVLLFSANLFAGVGFAAA). The tract at residues 27–111 (AAEGPEDKGL…PEPEPGAATL (85 aa)) is disordered. Positions 53-104 (DDTNGTDPDPEPEPEPEPEPEPEPEPEPEPEPEPEPEPEPEPEPEPEPEPEP) are enriched in acidic residues. An N-linked (GlcNAc...) asparagine glycan is attached at asparagine 56. 24 repeat units span residues 59–60 (DP), 61–62 (DP), 63–64 (EP), 65–66 (EP), 67–68 (EP), 69–70 (EP), 71–72 (EP), 73–74 (EP), 75–76 (EP), 77–78 (EP), 79–80 (EP), 81–82 (EP), 83–84 (EP), 85–86 (EP), 87–88 (EP), 89–90 (EP), 91–92 (EP), 93–94 (EP), 95–96 (EP), 97–98 (EP), 99–100 (EP), 101–102 (EP), 103–104 (EP), and 105–106 (EP). The segment at 59–106 (DPDPEPEPEPEPEPEPEPEPEPEPEPEPEPEPEPEPEPEPEPEPEPEP) is 24 X 2 AA tandem repeats of [DE]-P. Glycine 107 carries GPI-anchor amidated glycine lipidation. Residues 108-129 (AATLKSVALPFAIAAVGLVAAF) constitute a propeptide that is removed on maturation.

It localises to the cell membrane. In terms of biological role, major surface antigen of procyclic forms. The chain is Procyclic form-specific polypeptide A-beta (PARPA-BETA) from Trypanosoma brucei brucei.